The following is a 133-amino-acid chain: Arginine decarboxylase proenzyme (133 aa).

The active-site Schiff-base intermediate with substrate; via pyruvic acid is S81. Position 81 is a pyruvic acid (Ser); by autocatalysis (S81). The active-site Proton acceptor; for processing activity is H86. C101 (proton donor; for catalytic activity) is an active-site residue.

Belongs to the prokaryotic AdoMetDC family. Type 1 subfamily. In terms of assembly, heterooctamer of four alpha and four beta chains arranged as a tetramer of alpha/beta heterodimers. Pyruvate is required as a cofactor. Post-translationally, is synthesized initially as an inactive proenzyme. Formation of the active enzyme involves a self-maturation process in which the active site pyruvoyl group is generated from an internal serine residue via an autocatalytic post-translational modification. Two non-identical subunits are generated from the proenzyme in this reaction, and the pyruvate is formed at the N-terminus of the alpha chain, which is derived from the carboxyl end of the proenzyme. The post-translation cleavage follows an unusual pathway, termed non-hydrolytic serinolysis, in which the side chain hydroxyl group of the serine supplies its oxygen atom to form the C-terminus of the beta chain, while the remainder of the serine residue undergoes an oxidative deamination to produce ammonia and the pyruvoyl group blocking the N-terminus of the alpha chain.

It carries out the reaction L-arginine + H(+) = agmatine + CO2. Its pathway is amine and polyamine biosynthesis; agmatine biosynthesis; agmatine from L-arginine: step 1/1. Functionally, specifically catalyzes the decarboxylation of L-arginine to agmatine. Has no S-adenosylmethionine decarboxylase (AdoMetDC) activity. This is Arginine decarboxylase proenzyme from Pyrobaculum arsenaticum (strain DSM 13514 / JCM 11321 / PZ6).